Consider the following 968-residue polypeptide: Serine/threonine-protein kinase 10 (968 aa).

Phosphoserine is present on residues S13 and S20. The Protein kinase domain occupies 36-294 (WEIVGELGDG…AAQLLEHPFV (259 aa)). ATP contacts are provided by residues 42 to 50 (LGDGAFGKV) and K65. The Proton acceptor role is filled by D157. An activation segment region spans residues 175 to 224 (DFGVSAKNLKTLQKRDSFIGTPYWMAPEVVMCETMKDTPYDYKADIWSLG). A Phosphoserine modification is found at S191. 2 stretches are compositionally biased toward polar residues: residues 337–351 (LENH…SPPS) and 361–393 (SPST…TTSP). Disordered regions lie at residues 337 to 411 (LENH…VPLR) and 425 to 490 (AQEK…CSSL). Phosphoserine occurs at positions 438, 450, 454, 485, 514, and 549. A compositionally biased stretch (polar residues) spans 441-457 (ANRSQKASQSRPNSSAL). The stretch at 573–947 (QKEEHRNQTQ…FFKLSEEAEC (375 aa)) forms a coiled coil. Disordered regions lie at residues 668-690 (VEKL…HTQK), 827-865 (INGG…HENQ), 910-929 (LKEW…EDLN), and 944-968 (EAEC…ADAS). Residues 835-865 (EQREKIKQFSQQEEKRQKSERLQQQQKHENQ) are compositionally biased toward basic and acidic residues. Position 952 is a phosphothreonine (T952).

Belongs to the protein kinase superfamily. STE Ser/Thr protein kinase family. STE20 subfamily. Homodimer; homodimerization is required for activation segment autophosphorylation. In terms of processing, autophosphorylates following homodimerization, leading to activation of the protein. In terms of tissue distribution, highly expressed in rapidly proliferating tissues (spleen, placenta, and peripheral blood leukocytes). Also expressed in brain, heart, skeletal muscle, colon, thymus, kidney, liver, small intestine and lung.

The protein localises to the cell membrane. It carries out the reaction L-seryl-[protein] + ATP = O-phospho-L-seryl-[protein] + ADP + H(+). The enzyme catalyses L-threonyl-[protein] + ATP = O-phospho-L-threonyl-[protein] + ADP + H(+). With respect to regulation, inhibited by the pyrrole-indolinone inhibitor SU11274 (K00593): intercalates between the ATP-binding Lys-65 and alpha-C glutamate (Glu-81), resulting in a partial disordering of the lysine side chain. Also specifically inhibited by erlotinib. Slightly inhibited by gefitinib. In terms of biological role, serine/threonine-protein kinase involved in regulation of lymphocyte migration. Phosphorylates MSN, and possibly PLK1. Involved in regulation of lymphocyte migration by mediating phosphorylation of ERM proteins such as MSN. Acts as a negative regulator of MAP3K1/MEKK1. May also act as a cell cycle regulator by acting as a polo kinase kinase: mediates phosphorylation of PLK1 in vitro; however such data require additional evidences in vivo. This Homo sapiens (Human) protein is Serine/threonine-protein kinase 10 (STK10).